We begin with the raw amino-acid sequence, 298 residues long: HTH-type transcriptional regulator ArgP (298 aa).

In terms of domain architecture, HTH lysR-type spans 4-60; it reads LDYKWIEALDAVVYQGSFERAAEHLFVSQSAISQRIKQLEKFLAQPVLIREQPPKPT. A DNA-binding region (H-T-H motif) is located at residues 21 to 40; the sequence is FERAAEHLFVSQSAISQRIK.

This sequence belongs to the LysR transcriptional regulatory family. Homodimer.

Controls the transcription of genes involved in arginine and lysine metabolism. This is HTH-type transcriptional regulator ArgP from Vibrio parahaemolyticus serotype O3:K6 (strain RIMD 2210633).